Consider the following 158-residue polypeptide: Protein Smg homolog (158 aa).

The protein belongs to the Smg family.

This chain is Protein Smg homolog, found in Coxiella burnetii (strain RSA 331 / Henzerling II).